Consider the following 349-residue polypeptide: Phenylalanine--tRNA ligase alpha subunit (349 aa).

Mg(2+) is bound at residue Glu-264.

Belongs to the class-II aminoacyl-tRNA synthetase family. Phe-tRNA synthetase alpha subunit type 1 subfamily. As to quaternary structure, tetramer of two alpha and two beta subunits. Requires Mg(2+) as cofactor.

Its subcellular location is the cytoplasm. The enzyme catalyses tRNA(Phe) + L-phenylalanine + ATP = L-phenylalanyl-tRNA(Phe) + AMP + diphosphate + H(+). The protein is Phenylalanine--tRNA ligase alpha subunit of Myxococcus xanthus (strain DK1622).